Consider the following 144-residue polypeptide: Nucleoside diphosphate kinase (144 aa).

6 residues coordinate ATP: lysine 11, phenylalanine 59, arginine 87, threonine 93, arginine 104, and asparagine 114. Histidine 117 acts as the Pros-phosphohistidine intermediate in catalysis.

This sequence belongs to the NDK family. Homotetramer. Requires Mg(2+) as cofactor.

The protein localises to the cytoplasm. The catalysed reaction is a 2'-deoxyribonucleoside 5'-diphosphate + ATP = a 2'-deoxyribonucleoside 5'-triphosphate + ADP. The enzyme catalyses a ribonucleoside 5'-diphosphate + ATP = a ribonucleoside 5'-triphosphate + ADP. Functionally, major role in the synthesis of nucleoside triphosphates other than ATP. The ATP gamma phosphate is transferred to the NDP beta phosphate via a ping-pong mechanism, using a phosphorylated active-site intermediate. The polypeptide is Nucleoside diphosphate kinase (Vibrio atlanticus (strain LGP32) (Vibrio splendidus (strain Mel32))).